The chain runs to 257 residues: Imidazole glycerol phosphate synthase subunit HisF (257 aa).

Catalysis depends on residues D11 and D130.

Belongs to the HisA/HisF family. Heterodimer of HisH and HisF.

The protein resides in the cytoplasm. The catalysed reaction is 5-[(5-phospho-1-deoxy-D-ribulos-1-ylimino)methylamino]-1-(5-phospho-beta-D-ribosyl)imidazole-4-carboxamide + L-glutamine = D-erythro-1-(imidazol-4-yl)glycerol 3-phosphate + 5-amino-1-(5-phospho-beta-D-ribosyl)imidazole-4-carboxamide + L-glutamate + H(+). It functions in the pathway amino-acid biosynthesis; L-histidine biosynthesis; L-histidine from 5-phospho-alpha-D-ribose 1-diphosphate: step 5/9. In terms of biological role, IGPS catalyzes the conversion of PRFAR and glutamine to IGP, AICAR and glutamate. The HisF subunit catalyzes the cyclization activity that produces IGP and AICAR from PRFAR using the ammonia provided by the HisH subunit. The chain is Imidazole glycerol phosphate synthase subunit HisF from Tolumonas auensis (strain DSM 9187 / NBRC 110442 / TA 4).